Here is a 188-residue protein sequence, read N- to C-terminus: Elongation factor P-like protein (188 aa).

Belongs to the elongation factor P family.

The chain is Elongation factor P-like protein from Vibrio vulnificus (strain CMCP6).